The chain runs to 300 residues: 2-oxoglutarate-dependent dioxygenase DAO (300 aa).

Positions 149–252 (WPCQFRMNRY…VSIAMFLLAP (104 aa)) constitute a Fe2OG dioxygenase domain. His173, Asp175, and His232 together coordinate Fe cation. Arg242 provides a ligand contact to 2-oxoglutarate.

It belongs to the iron/ascorbate-dependent oxidoreductase family. Fe(2+) serves as cofactor.

Functionally, 2-oxoglutarate-dependent dioxygenase essential for auxin catabolism and maintenance of auxin homeostasis in reproductive organs. Catalyzes the irreversible oxidation of indole-3-acetic acid (IAA) to the biologically inactive 2-oxoindole-3-acetic acid (OxIAA). The polypeptide is 2-oxoglutarate-dependent dioxygenase DAO (DAO) (Oryza sativa subsp. indica (Rice)).